The following is a 750-amino-acid chain: uncharacterized protein (750 aa).

This is an uncharacterized protein from Escherichia coli (strain K12).